Consider the following 378-residue polypeptide: Glutamate 5-kinase (378 aa).

An ATP-binding site is contributed by lysine 19. Positions 59, 146, and 158 each coordinate substrate. 178 to 179 serves as a coordination point for ATP; sequence TD. Positions 285–363 constitute a PUA domain; sequence RGSVAVDAGA…SEFERLLGYT (79 aa).

This sequence belongs to the glutamate 5-kinase family.

The protein resides in the cytoplasm. It carries out the reaction L-glutamate + ATP = L-glutamyl 5-phosphate + ADP. The protein operates within amino-acid biosynthesis; L-proline biosynthesis; L-glutamate 5-semialdehyde from L-glutamate: step 1/2. Catalyzes the transfer of a phosphate group to glutamate to form L-glutamate 5-phosphate. This Polaromonas sp. (strain JS666 / ATCC BAA-500) protein is Glutamate 5-kinase.